Reading from the N-terminus, the 282-residue chain is F-box protein VBF (282 aa).

One can recognise an F-box domain in the interval 1–44; it reads MMMLPEACIANILAFTSPADAFSSSEVSSVFRLAGDSDFVWEKF.

As to quaternary structure, component of SCF(VBF) E3 ubiquitin ligase complex that interacts with VIP1. Interacts directly with SKP1A and VIP1. Forms a complex composed of VIP1, VBF and Agrobacterium virE2.

In terms of biological role, component of SCF(VBF) E3 ubiquitin ligase complexes, which mediate the ubiquitination and subsequent proteasomal degradation of target proteins such as VIP1 and Agrobacterium virE2, after their implication in T-DNA translocation to the host nucleus (can functionally replace Agrobacterium VirF). Required during Agrobacterium-induced tumor formation. This is F-box protein VBF (VBF) from Arabidopsis thaliana (Mouse-ear cress).